Consider the following 486-residue polypeptide: Glycogen synthase (486 aa).

ADP-alpha-D-glucose is bound at residue K15.

This sequence belongs to the glycosyltransferase 1 family. Bacterial/plant glycogen synthase subfamily.

The catalysed reaction is [(1-&gt;4)-alpha-D-glucosyl](n) + ADP-alpha-D-glucose = [(1-&gt;4)-alpha-D-glucosyl](n+1) + ADP + H(+). It functions in the pathway glycan biosynthesis; glycogen biosynthesis. Synthesizes alpha-1,4-glucan chains using ADP-glucose. The polypeptide is Glycogen synthase (Pseudothermotoga lettingae (strain ATCC BAA-301 / DSM 14385 / NBRC 107922 / TMO) (Thermotoga lettingae)).